The primary structure comprises 38 residues: uncharacterized protein (38 aa).

This is an uncharacterized protein from Haemophilus influenzae (strain ATCC 51907 / DSM 11121 / KW20 / Rd).